Reading from the N-terminus, the 284-residue chain is RNase adapter protein RapZ (284 aa).

An ATP-binding site is contributed by 8-15; sequence GRSGSGKS. Residue 56–59 coordinates GTP; it reads DVRN. The RNA-binding stretch occupies residues 266 to 284; sequence RSRGKNVQSRHRTLEKRKP.

This sequence belongs to the RapZ-like family. RapZ subfamily. Homotrimer.

In terms of biological role, modulates the synthesis of GlmS, by affecting the processing and stability of the regulatory small RNA GlmZ. When glucosamine-6-phosphate (GlcN6P) concentrations are high in the cell, RapZ binds GlmZ and targets it to cleavage by RNase E. Consequently, GlmZ is inactivated and unable to activate GlmS synthesis. Under low GlcN6P concentrations, RapZ is sequestered and inactivated by an other regulatory small RNA, GlmY, preventing GlmZ degradation and leading to synthesis of GlmS. The polypeptide is RNase adapter protein RapZ (Escherichia coli O1:K1 / APEC).